A 217-amino-acid polypeptide reads, in one-letter code: Lectin ADEL (217 aa).

Intrachain disulfides connect C5–C187, C42–C68, C61–C77, C114–C135, and C142–C206. A glycan (N-linked (GlcNAc...) asparagine) is linked at N30. N102 and N126 each carry an N-linked (GlcNAc...) asparagine glycan.

In terms of assembly, homodimer; disulfide-linked. Contains disulfide bonds.

Binds in decreasing order of affinity: galacturonic acid, D-galactosamine, methyl-alpha-D-galactopyranoside and further galactose-containing carbohydrates. Has hemagglutinating activity against human and rabbit erythrocytes. In Aplysia dactylomela (Spotted sea hare), this protein is Lectin ADEL.